The chain runs to 403 residues: MHSFKRSLLLLGALLPAVFGAPVEPRRAAEKVPGKYIVTFKSGLNVDQIDAHTSWASNVHKRNLERRGLAERDQYSGIEKNYKINKFAAYSGSFDDATIEEIRNSADVAHVEEDQIWYIDALTSQSGAPWGLGAISHKGEASTTYVYDTSAGEGTYAYVVDTGINADHEEFGGRASLAYNAVGGQHVDSVGHGTHVAGTIGGETYGVSKKANLLSVKVFQGESSSTSIILDGFNWAANDIVSKGRTGKSAINMSLGGGYSYAFNQAVEDAYDEGVLSVVAAGNDNIDASDSSPASAPNALTVAASTKSNTRASFSNYGSVVDIFAPGQDILSAWIGSTTATNTISGTSMATPHVVGLSLYLIALEGLSSASAVVSRIKELATQGVLSNVQGSPNLLAYNGADE.

An N-terminal signal peptide occupies residues 1–21; it reads MHSFKRSLLLLGALLPAVFGA. Positions 22–124 are excised as a propeptide; that stretch reads PVEPRRAAEK…QIWYIDALTS (103 aa). One can recognise an Inhibitor I9 domain in the interval 35–119; that stretch reads KYIVTFKSGL…HVEEDQIWYI (85 aa). Positions 129–403 constitute a Peptidase S8 domain; that stretch reads PWGLGAISHK…NLLAYNGADE (275 aa). Residues Asp-161 and His-192 each act as charge relay system in the active site. Asn-252 carries N-linked (GlcNAc...) asparagine glycosylation. Residue Ser-348 is the Charge relay system of the active site.

This sequence belongs to the peptidase S8 family.

It localises to the secreted. It catalyses the reaction Hydrolysis of proteins with broad specificity, and of Bz-Arg-OEt &gt; Ac-Tyr-OEt. Does not hydrolyze peptide amides.. Secreted alkaline protease that allows assimilation of proteinaceous substrates. This Emericella nidulans (strain FGSC A4 / ATCC 38163 / CBS 112.46 / NRRL 194 / M139) (Aspergillus nidulans) protein is Alkaline protease 1 (alp1).